Reading from the N-terminus, the 503-residue chain is Arabinose import ATP-binding protein AraG (503 aa).

ABC transporter domains are found at residues 5 to 240 (LRFD…MVGR) and 253 to 497 (LGDV…LPQG). 37–44 (GENGAGKS) contacts ATP.

This sequence belongs to the ABC transporter superfamily. Arabinose importer (TC 3.A.1.2.2) family. In terms of assembly, the complex is composed of two ATP-binding proteins (AraG), two transmembrane proteins (AraH) and a solute-binding protein (AraF).

It is found in the cell inner membrane. It carries out the reaction L-arabinose(out) + ATP + H2O = L-arabinose(in) + ADP + phosphate + H(+). In terms of biological role, part of the ABC transporter complex AraFGH involved in arabinose import. Responsible for energy coupling to the transport system. The sequence is that of Arabinose import ATP-binding protein AraG from Burkholderia pseudomallei (strain 1710b).